A 956-amino-acid polypeptide reads, in one-letter code: Endogenous retrovirus group K member 6 Pol protein (956 aa).

The Reverse transcriptase domain maps to 57 to 245 (LEKGHIEPSF…TPFHYLGMQI (189 aa)). The LPQG signature appears at 161 to 164 (LPQG). The short motif at 195 to 198 (CIDD) is the YXDD element. Positions 460–590 (LENALTVFTD…ADLLVSSALI (131 aa)) constitute an RNase H type-1 domain. Mg(2+) is bound by residues D469, E497, D517, and D582. The segment at 587–628 (SALIKAQELHALTHVNAAGLKNKFDVTWKQAKDIVQHCTQCQ) adopts an Integrase-type zinc-finger fold. Residues H596, H600, C624, and C627 each contribute to the Zn(2+) site. Positions 642–803 (RGLCPNALWQ…TSAEQHLTGK (162 aa)) constitute an Integrase catalytic domain. A DNA-binding region (integrase-type) is located at residues 811 to 859 (KLIWWKDNKNKTWEIGKVITWGRGFACVSPGENQLPVWIPTRHLKFYNE). Residues 865–890 (KKSTSAETETSQSSTVDSQDEQNGDV) form a disordered region. Residues 869-879 (SAETETSQSST) show a composition bias toward low complexity.

This sequence belongs to the beta type-B retroviral polymerase family. HERV class-II K(HML-2) pol subfamily. Post-translationally, cleavage sites that yield the mature proteins remain to be determined.

It carries out the reaction DNA(n) + a 2'-deoxyribonucleoside 5'-triphosphate = DNA(n+1) + diphosphate. The enzyme catalyses Endonucleolytic cleavage to 5'-phosphomonoester.. Functionally, early post-infection, the reverse transcriptase converts the viral RNA genome into double-stranded viral DNA. The RNase H domain of the reverse transcriptase performs two functions. It degrades the RNA template and specifically removes the RNA primer from the RNA/DNA hybrid. Following nuclear import, the integrase catalyzes the insertion of the linear, double-stranded viral DNA into the host cell chromosome. Endogenous Pol proteins may have kept, lost or modified their original function during evolution. In Homo sapiens (Human), this protein is Endogenous retrovirus group K member 6 Pol protein (ERVK-6).